We begin with the raw amino-acid sequence, 87 residues long: Acyl-CoA-binding protein (87 aa).

Position 2 is an N-acetylserine (S2). The ACB domain occupies 2–87; it reads SQAEFDKAAE…VEDLKKKYGI (86 aa). K8 is subject to N6-acetyllysine; alternate. K8 carries the post-translational modification N6-succinyllysine; alternate. K14 is an an acyl-CoA binding site. Position 17 is an N6-succinyllysine (K17). Residue K19 is modified to N6-acetyllysine. Y29 carries the post-translational modification Phosphotyrosine. An acyl-CoA-binding positions include 29–33, K55, and Y74; that span reads YSHYK. An N6-acetyllysine; alternate modification is found at K55. K55 is modified (N6-succinyllysine; alternate). K55 carries the post-translational modification N6-(2-hydroxyisobutyryl)lysine; alternate. The residue at position 55 (K55) is an N6-malonyllysine; alternate. N6-acetyllysine; alternate is present on K77. At K77 the chain carries N6-succinyllysine; alternate.

This sequence belongs to the ACBP family. In terms of assembly, monomer.

It is found in the endoplasmic reticulum. The protein localises to the golgi apparatus. Binds medium- and long-chain acyl-CoA esters with very high affinity and may function as an intracellular carrier of acyl-CoA esters. The protein is Acyl-CoA-binding protein (DBI) of Canis lupus familiaris (Dog).